Here is a 415-residue protein sequence, read N- to C-terminus: Serine hydroxymethyltransferase (415 aa).

(6S)-5,6,7,8-tetrahydrofolate contacts are provided by residues Leu-117 and 121–123; that span reads GHL. Lys-226 carries the post-translational modification N6-(pyridoxal phosphate)lysine. (6S)-5,6,7,8-tetrahydrofolate-binding positions include Glu-241 and 349-351; that span reads SPF.

Belongs to the SHMT family. As to quaternary structure, homodimer. Pyridoxal 5'-phosphate serves as cofactor.

Its subcellular location is the cytoplasm. It catalyses the reaction (6R)-5,10-methylene-5,6,7,8-tetrahydrofolate + glycine + H2O = (6S)-5,6,7,8-tetrahydrofolate + L-serine. Its pathway is one-carbon metabolism; tetrahydrofolate interconversion. It participates in amino-acid biosynthesis; glycine biosynthesis; glycine from L-serine: step 1/1. Functionally, catalyzes the reversible interconversion of serine and glycine with tetrahydrofolate (THF) serving as the one-carbon carrier. This reaction serves as the major source of one-carbon groups required for the biosynthesis of purines, thymidylate, methionine, and other important biomolecules. Also exhibits THF-independent aldolase activity toward beta-hydroxyamino acids, producing glycine and aldehydes, via a retro-aldol mechanism. This is Serine hydroxymethyltransferase from Trichlorobacter lovleyi (strain ATCC BAA-1151 / DSM 17278 / SZ) (Geobacter lovleyi).